The chain runs to 109 residues: Homeobox protein E30 (109 aa).

A compositionally biased stretch (basic residues) spans 1–12 (GPRTRRVKRSHN). The segment at 1-27 (GPRTRRVKRSHNGKNGSPEEKRPRTAF) is disordered. Positions 20 to 79 (EKRPRTAFSAEQLARLKREFAENRYLTERRRQQLSRDLGLTEAQIKIWFQNKRAKIKKAS) form a DNA-binding region, homeobox.

The protein belongs to the engrailed homeobox family.

The protein resides in the nucleus. The sequence is that of Homeobox protein E30 from Apis mellifera (Honeybee).